A 350-amino-acid chain; its full sequence is DNA repair protein rhp55 (350 aa).

Position 51-58 (51-58) interacts with ATP; it reads GAPGMGKT. The tract at residues 331–350 is disordered; that stretch reads QSIPTNSSQRRKRSILECES.

It belongs to the RecA family. RAD55 subfamily.

The protein resides in the nucleus. Required for radiation resistance and meiotic viability and acts in recombination and recombinational DNA repair pathways. The protein is DNA repair protein rhp55 (rhp55) of Schizosaccharomyces pombe (strain 972 / ATCC 24843) (Fission yeast).